The primary structure comprises 1098 residues: MGFNEFIGKLFGNKATRDMKEIKPWVDKIKAVYPEIAKLSNDELRAKTVELKKYISDSAAEEQKKIEELKGTIETTELEDREGIFAQIDKLEKEVLEKYEKALDDVLPQAFAIVKDTARRFSENPELVVTATDFDRELAAQGKDFVRIEDDKAIWQNHWIAGGNDMVWSMVHYDVQLFGGVVLHKGKIAEMATGEGKTLVATLPVFLNALTGNGVHVVTVNDYLSKRDSEWMGPLYQFHGLSVDCIDKHQPNSDARRRAYMADITFGTNNEFGFDYLRDNMAVSPKDLVQRKHNYAIVDEVDSVLIDDARTPLIISGPVPKGEDQLFEQLRPLVERLFEAQKKLATQYLADAKRLIASDDKKDQEEGFLALFRSHKALPKNKPLIKFLSEQGIKAGMLKTEEIYMEQNNKRMPEATDPLYFVIDEKQNSVDLTDKGIDLITGNAADPTLFVLPDITSQLSALENETDLTEEEKLAKKDELMTNYAIKSERVHTINQLLKAYAMFEKDDEYVVIDGQVKIVDEQTGRIMEGRRYSDGLHQAIEAKEGVKVEAATQTFATITLQNYFRMYHKLSGMTGTAETEAGELWDIYKLDVVVIPTNRPIARKDMNDRVYKTKREKYKAVIEEIEEMVKEGRPVLVGTTSVEISEMLSKMLAMRKIEHNVLNAKLHQREADIVAQAGQKSIVTIATNMAGRGTDIKLSPEVKAAGGLAIIGTERHESRRVDRQLRGRAGRQGDPGSSVFFVSLEDDLMRLFSSDRIASVMDKLGFKEGEMIEHKMISNSIERAQKKVEENNFGIRKRLLEYDDVMNKQRVAVYTKRRHALMGERIGMDIVNMIWDRCAYAVELGDFDNVKMEILQTLAMEVPFTEEEYNKMRKEDLAEKTFEAAMNNFKRKTDRMAQIANPVIKQVYEMQGHMYENIMIPITDGKRLYNISVNLKAAYETEGKEIVKSFEKAILLHTIDDAWKENLRELDELKHSVQNASYEQKDPLLIFKLESVNLFDNMVNKINNNTISVLMRGQIPVQEPEQVREAAPEPQAPRQQYREEKQDLSDPHQQAAAEHDTREVKREPVRAEKTVGRNDPCPCGSGKKYKNCHGQNA.

ATP is bound by residues Gln-176, 194–198 (GEGKT), and Asp-696. Residues 1024 to 1098 (EPEQVREAAP…KYKNCHGQNA (75 aa)) form a disordered region. Basic and acidic residues-rich tracts occupy residues 1041 to 1051 (QYREEKQDLSD) and 1058 to 1077 (AEHD…KTVG). 4 residues coordinate Zn(2+): Cys-1082, Cys-1084, Cys-1093, and His-1094.

The protein belongs to the SecA family. In terms of assembly, monomer and homodimer. Part of the essential Sec protein translocation apparatus which comprises SecA, SecYEG and auxiliary proteins SecDF. Other proteins may also be involved. Zn(2+) serves as cofactor.

It is found in the cell inner membrane. The protein localises to the cytoplasm. It catalyses the reaction ATP + H2O + cellular proteinSide 1 = ADP + phosphate + cellular proteinSide 2.. In terms of biological role, part of the Sec protein translocase complex. Interacts with the SecYEG preprotein conducting channel. Has a central role in coupling the hydrolysis of ATP to the transfer of proteins into and across the cell membrane, serving as an ATP-driven molecular motor driving the stepwise translocation of polypeptide chains across the membrane. In Phocaeicola vulgatus (strain ATCC 8482 / DSM 1447 / JCM 5826 / CCUG 4940 / NBRC 14291 / NCTC 11154) (Bacteroides vulgatus), this protein is Protein translocase subunit SecA.